The primary structure comprises 155 residues: uncharacterized protein (155 aa).

The N-terminal stretch at 1–21 is a signal peptide; that stretch reads MFFIVAAGFVIAALIAAIGMA. The disordered stretch occupies residues 35–155; the sequence is GQTKPATTRP…PVYRPPEEMV (121 aa). A compositionally biased stretch (polar residues) spans 118 to 128; that stretch reads ATASNTPQNEA.

This is an uncharacterized protein from Schizosaccharomyces pombe (strain 972 / ATCC 24843) (Fission yeast).